The primary structure comprises 1325 residues: uncharacterized protein (1325 aa).

The signal sequence occupies residues 1–27; it reads MHTFTRKVKWPFMFTAIGLTFGIVAVA. The N-palmitoyl cysteine moiety is linked to residue cysteine 28. Cysteine 28 carries S-diacylglycerol cysteine lipidation. Disordered regions lie at residues 379-402 and 430-464; these read RAASSSSEGTIQLKTASDGGGTTQ and NTNANQTGGGGSGGGGGTSTGSSTGSSTETTTGNS. The span at 436–448 shows a compositional bias: gly residues; that stretch reads TGGGGSGGGGGTS. The segment covering 449–464 has biased composition (low complexity); that stretch reads TGSSTGSSTETTTGNS.

This sequence belongs to the MG307/MG309/MG338 family.

It is found in the cell membrane. This is an uncharacterized protein from Mycoplasma pneumoniae (strain ATCC 29342 / M129 / Subtype 1) (Mycoplasmoides pneumoniae).